The chain runs to 482 residues: Proline--tRNA ligase (482 aa).

Belongs to the class-II aminoacyl-tRNA synthetase family. ProS type 3 subfamily. As to quaternary structure, homodimer.

It is found in the cytoplasm. The enzyme catalyses tRNA(Pro) + L-proline + ATP = L-prolyl-tRNA(Pro) + AMP + diphosphate. In terms of biological role, catalyzes the attachment of proline to tRNA(Pro) in a two-step reaction: proline is first activated by ATP to form Pro-AMP and then transferred to the acceptor end of tRNA(Pro). In Mycoplasmopsis synoviae (strain 53) (Mycoplasma synoviae), this protein is Proline--tRNA ligase.